A 178-amino-acid polypeptide reads, in one-letter code: ATP synthase subunit delta (178 aa).

Belongs to the ATPase delta chain family. As to quaternary structure, F-type ATPases have 2 components, F(1) - the catalytic core - and F(0) - the membrane proton channel. F(1) has five subunits: alpha(3), beta(3), gamma(1), delta(1), epsilon(1). F(0) has three main subunits: a(1), b(2) and c(10-14). The alpha and beta chains form an alternating ring which encloses part of the gamma chain. F(1) is attached to F(0) by a central stalk formed by the gamma and epsilon chains, while a peripheral stalk is formed by the delta and b chains.

The protein localises to the cell membrane. In terms of biological role, f(1)F(0) ATP synthase produces ATP from ADP in the presence of a proton or sodium gradient. F-type ATPases consist of two structural domains, F(1) containing the extramembraneous catalytic core and F(0) containing the membrane proton channel, linked together by a central stalk and a peripheral stalk. During catalysis, ATP synthesis in the catalytic domain of F(1) is coupled via a rotary mechanism of the central stalk subunits to proton translocation. Functionally, this protein is part of the stalk that links CF(0) to CF(1). It either transmits conformational changes from CF(0) to CF(1) or is implicated in proton conduction. This chain is ATP synthase subunit delta, found in Acetivibrio thermocellus (strain ATCC 27405 / DSM 1237 / JCM 9322 / NBRC 103400 / NCIMB 10682 / NRRL B-4536 / VPI 7372) (Clostridium thermocellum).